Reading from the N-terminus, the 270-residue chain is Tetraspanin-2 (270 aa).

Over 1–8 the chain is Cytoplasmic; sequence MALANNLT. Residues 9–29 traverse the membrane as a helical segment; the sequence is AILNLLALLCSIPITASGIWL. Residues 30 to 42 lie on the Extracellular side of the membrane; it reads ASKPDNECVNLLR. Residues 43–63 form a helical membrane-spanning segment; it reads WPVVVLGVLILVVSATGFIGA. Over 64 to 74 the chain is Cytoplasmic; the sequence is YKYKETLLAVY. Residues 75 to 95 form a helical membrane-spanning segment; the sequence is LCCMAILIGLLLVVLIFAFVV. At 96–232 the chain is on the extracellular side; it reads TRPDGSYRVP…NLRKEWRKAN (137 aa). A helical membrane pass occupies residues 233-253; it reads LILIITVVVLIWVYVIACSAF. The Cytoplasmic portion of the chain corresponds to 254 to 270; it reads RNAQTEDLFRKYKQGWV.

It belongs to the tetraspanin (TM4SF) family.

It is found in the membrane. May be involved in the regulation of cell differentiation. The protein is Tetraspanin-2 (TET2) of Arabidopsis thaliana (Mouse-ear cress).